Here is a 231-residue protein sequence, read N- to C-terminus: MTQDELKRLVGQAAADYVIQNVPEGAVIGVGTGSTANCFIDALAAVKSRYRGAVSSSVATTERLKSHGIKVFDLNEIDALQVYVDGADEIDAGGAMIKGGGGALTREKIVASVADTFVCIADGSKRVPVLGAFPLPIEVVPMARTAIGRRVTALGGVPVLRVTKDGAPYITDNGNEIIDVKGLQIADPRGFEARVNAWPGVVTVGLFAERGANLCLLGTENGVETIVYPAA.

Residues 32–35, 85–88, and 98–101 contribute to the substrate site; these read TGST, DGAD, and KGGG. Glutamate 107 functions as the Proton acceptor in the catalytic mechanism. Lysine 125 contributes to the substrate binding site.

Belongs to the ribose 5-phosphate isomerase family. As to quaternary structure, homodimer.

It catalyses the reaction aldehydo-D-ribose 5-phosphate = D-ribulose 5-phosphate. It functions in the pathway carbohydrate degradation; pentose phosphate pathway; D-ribose 5-phosphate from D-ribulose 5-phosphate (non-oxidative stage): step 1/1. In terms of biological role, catalyzes the reversible conversion of ribose-5-phosphate to ribulose 5-phosphate. This Burkholderia cenocepacia (strain ATCC BAA-245 / DSM 16553 / LMG 16656 / NCTC 13227 / J2315 / CF5610) (Burkholderia cepacia (strain J2315)) protein is Ribose-5-phosphate isomerase A.